The chain runs to 372 residues: 3-ketodihydrosphingosine reductase TSC10 (372 aa).

V64 is a binding site for NADP(+). Positions 67, 69, 71, 92, 96, 123, and 124 each coordinate NADPH. Positions 67–71 match the GXSXG motif; sequence GGSQG. D123 lines the NADP(+) pocket. The active-site Proton donor is the S205. NADP(+)-binding residues include Y219, K223, and S254. The Proton acceptor role is filled by Y219. Catalysis depends on K223, which acts as the Lowers pKa of active site Tyr. The chain crosses the membrane as a helical span at residues 321 to 341; it reads LLQIPLAIFMCIFSPVWNAFV.

It belongs to the short-chain dehydrogenases/reductases (SDR) family.

The protein localises to the endoplasmic reticulum membrane. It carries out the reaction sphinganine + NADP(+) = 3-oxosphinganine + NADPH + H(+). It functions in the pathway lipid metabolism; sphingolipid metabolism. Its function is as follows. Catalyzes the reduction of 3'-oxosphinganine (3-ketodihydrosphingosine/KDS) to sphinganine (dihydrosphingosine/DHS), the second step of de novo sphingolipid biosynthesis. The polypeptide is 3-ketodihydrosphingosine reductase TSC10 (TSC10) (Yarrowia lipolytica (strain CLIB 122 / E 150) (Yeast)).